Consider the following 223-residue polypeptide: Transcriptional regulatory protein HprR (223 aa).

One can recognise a Response regulatory domain in the interval 2–115 (KILLIEDNQR…ELLARVRAQL (114 aa)). 4-aspartylphosphate is present on Asp-51. Residues 122–220 (NSTLEISGLR…IRGMGYSFVA (99 aa)) constitute a DNA-binding region (ompR/PhoB-type).

Post-translationally, phosphorylated by HprS.

The protein localises to the cytoplasm. In terms of biological role, member of a two-component regulatory system HprR/HprS involved in response to hydrogen peroxide. Regulates the expression of at least 5 operons, cyoABCDE, hprRS, hiuH, cusRS and cusCFBA. Bifunctional regulator that acts as an activator and a repressor. In Escherichia coli (strain K12), this protein is Transcriptional regulatory protein HprR.